We begin with the raw amino-acid sequence, 340 residues long: Flap endonuclease 1 (340 aa).

The interval M1 to K98 is N-domain. 7 residues coordinate Mg(2+): D27, D80, E152, E154, D173, D175, and D236. The tract at residues D116–S258 is I-domain.

It belongs to the XPG/RAD2 endonuclease family. FEN1 subfamily. In terms of assembly, interacts with PCNA. PCNA stimulates the nuclease activity without altering cleavage specificity. Mg(2+) serves as cofactor.

Its function is as follows. Structure-specific nuclease with 5'-flap endonuclease and 5'-3' exonuclease activities involved in DNA replication and repair. During DNA replication, cleaves the 5'-overhanging flap structure that is generated by displacement synthesis when DNA polymerase encounters the 5'-end of a downstream Okazaki fragment. Binds the unpaired 3'-DNA end and kinks the DNA to facilitate 5' cleavage specificity. Cleaves one nucleotide into the double-stranded DNA from the junction in flap DNA, leaving a nick for ligation. Also involved in the base excision repair (BER) pathway. Acts as a genome stabilization factor that prevents flaps from equilibrating into structures that lead to duplications and deletions. Also possesses 5'-3' exonuclease activity on nicked or gapped double-stranded DNA. This chain is Flap endonuclease 1, found in Nitrosopumilus maritimus (strain SCM1).